A 486-amino-acid polypeptide reads, in one-letter code: N-succinylglutamate 5-semialdehyde dehydrogenase (486 aa).

220–225 is a binding site for NAD(+); the sequence is GSSRTG. Residues glutamate 243 and cysteine 277 contribute to the active site.

Belongs to the aldehyde dehydrogenase family. AstD subfamily.

It carries out the reaction N-succinyl-L-glutamate 5-semialdehyde + NAD(+) + H2O = N-succinyl-L-glutamate + NADH + 2 H(+). Its pathway is amino-acid degradation; L-arginine degradation via AST pathway; L-glutamate and succinate from L-arginine: step 4/5. Catalyzes the NAD-dependent reduction of succinylglutamate semialdehyde into succinylglutamate. The protein is N-succinylglutamate 5-semialdehyde dehydrogenase of Shewanella frigidimarina (strain NCIMB 400).